The sequence spans 228 residues: Ribulose-phosphate 3-epimerase (228 aa).

Ser-9 contributes to the substrate binding site. A divalent metal cation contacts are provided by His-34, Asp-36, and His-70. Asp-36 (proton acceptor) is an active-site residue. Residues His-70, 146–149, 175–177, and 197–198 each bind substrate; these read GKGG, DGG, and GT. Asp-175 is an a divalent metal cation binding site. The active-site Proton donor is Asp-175.

This sequence belongs to the ribulose-phosphate 3-epimerase family. Co(2+) is required as a cofactor. Fe(2+) serves as cofactor. The cofactor is Mn(2+). It depends on Zn(2+) as a cofactor.

The enzyme catalyses D-ribulose 5-phosphate = D-xylulose 5-phosphate. It functions in the pathway carbohydrate degradation; pentose phosphate pathway; D-xylulose 5-phosphate from D-ribulose 5-phosphate (non-oxidative stage): step 1/1. Catalyzes the reversible epimerization of D-ribulose 5-phosphate to D-xylulose 5-phosphate. In Schizosaccharomyces pombe (strain 972 / ATCC 24843) (Fission yeast), this protein is Ribulose-phosphate 3-epimerase.